The chain runs to 117 residues: MKYPLLALIKLYQWTISPLLGPVCKYYPSCSHYGYQAIDRHGAIKGTALTAWRILRCNPWSLGGVDHVPPRKRPRWHEMLRNAWRARKGGPSAAEPAIEGHIPSSPAAETPSHVQGA.

Residues 87-117 (RKGGPSAAEPAIEGHIPSSPAAETPSHVQGA) are disordered.

This sequence belongs to the UPF0161 family.

It is found in the cell membrane. In terms of biological role, could be involved in insertion of integral membrane proteins into the membrane. The protein is Putative membrane protein insertion efficiency factor of Streptomyces avermitilis (strain ATCC 31267 / DSM 46492 / JCM 5070 / NBRC 14893 / NCIMB 12804 / NRRL 8165 / MA-4680).